The following is a 301-amino-acid chain: N-acetylmuramic acid 6-phosphate etherase (301 aa).

Residues 57 to 220 (IAEAFRQGGR…TTGAMIRTGK (164 aa)) enclose the SIS domain. E85 serves as the catalytic Proton donor. The active site involves E116.

This sequence belongs to the GCKR-like family. MurNAc-6-P etherase subfamily. In terms of assembly, homodimer.

The catalysed reaction is N-acetyl-D-muramate 6-phosphate + H2O = N-acetyl-D-glucosamine 6-phosphate + (R)-lactate. The protein operates within amino-sugar metabolism; 1,6-anhydro-N-acetylmuramate degradation. It functions in the pathway amino-sugar metabolism; N-acetylmuramate degradation. Its pathway is cell wall biogenesis; peptidoglycan recycling. Functionally, specifically catalyzes the cleavage of the D-lactyl ether substituent of MurNAc 6-phosphate, producing GlcNAc 6-phosphate and D-lactate. Together with AnmK, is also required for the utilization of anhydro-N-acetylmuramic acid (anhMurNAc) either imported from the medium or derived from its own cell wall murein, and thus plays a role in cell wall recycling. This is N-acetylmuramic acid 6-phosphate etherase from Photorhabdus laumondii subsp. laumondii (strain DSM 15139 / CIP 105565 / TT01) (Photorhabdus luminescens subsp. laumondii).